The sequence spans 456 residues: Keratin, type I cytoskeletal 12 (456 aa).

The segment covering 1–19 (MSLSVRTSALSRRSSSQNG) has biased composition (polar residues). The disordered stretch occupies residues 1-25 (MSLSVRTSALSRRSSSQNGVAGRPW). Positions 1-114 (MSLSVRTSAL…GNDGGLLSGS (114 aa)) are head. Residues 115–150 (EKETMQNLNDRLASYLGKVRALEEANAELENKIREW) are coil 1A. Residues 115–402 (EKETMQNLND…RLLEGDTQGD (288 aa)) enclose the IF rod domain. The interval 154-171 (RRTGDSGSQSDYSKYYPL) is linker 1. Positions 172–263 (IEDLKNKIIS…KNHEEELQSF (92 aa)) are coil 1B. Residues 264-286 (QAGGPGEVNVEMDAAPGVDLTKS) are linker 12. Residues 287 to 397 (GELRKEINSN…IETYRRLLEG (111 aa)) are coil 2. The tract at residues 398–456 (DTQGDGFDESLSLTVSKPQAPSVDSSKDPNKTRKIKTVVQEIVNGEVVSSQVQELEEAM) is tail. A disordered region spans residues 405–430 (DESLSLTVSKPQAPSVDSSKDPNKTR). Over residues 408–421 (LSLTVSKPQAPSVD) the composition is skewed to polar residues.

Belongs to the intermediate filament family. As to quaternary structure, heterotetramer of two type I and two type II keratins. Keratin-3 associates with keratin-12.

In terms of biological role, involved in corneal epithelium organization, integrity and corneal keratin expression. This chain is Keratin, type I cytoskeletal 12, found in Rattus norvegicus (Rat).